We begin with the raw amino-acid sequence, 1018 residues long: Integrator complex subunit 5 (1018 aa).

Positions 1–26 are disordered; it reads MSALCDPPGAPGPPGPAPATHGPAPL. An N-acetylserine modification is found at Ser2. Residues 8–17 show a composition bias toward pro residues; it reads PGAPGPPGPA. Ser278 carries the post-translational modification Phosphoserine. Transmembrane regions (helical) follow at residues 533–553, 855–875, and 929–949; these read LATQ…PLAF, LLFE…YCSV, and VFSQ…WGFL.

Belongs to the Integrator subunit 5 family. Component of the Integrator complex, composed of core subunits INTS1, INTS2, INTS3, INTS4, INTS5, INTS6, INTS7, INTS8, INTS9/RC74, INTS10, INTS11/CPSF3L, INTS12, INTS13, INTS14 and INTS15. The core complex associates with protein phosphatase 2A subunits PPP2CA and PPP2R1A, to form the Integrator-PP2A (INTAC) complex.

The protein localises to the nucleus. It is found in the cytoplasm. Its subcellular location is the nucleus membrane. Component of the integrator complex, a multiprotein complex that terminates RNA polymerase II (Pol II) transcription in the promoter-proximal region of genes. The integrator complex provides a quality checkpoint during transcription elongation by driving premature transcription termination of transcripts that are unfavorably configured for transcriptional elongation: the complex terminates transcription by (1) catalyzing dephosphorylation of the C-terminal domain (CTD) of Pol II subunit POLR2A/RPB1 and SUPT5H/SPT5, (2) degrading the exiting nascent RNA transcript via endonuclease activity and (3) promoting the release of Pol II from bound DNA. The integrator complex is also involved in terminating the synthesis of non-coding Pol II transcripts, such as enhancer RNAs (eRNAs), small nuclear RNAs (snRNAs), telomerase RNAs and long non-coding RNAs (lncRNAs). Mediates recruitment of cytoplasmic dynein to the nuclear envelope, probably as component of the integrator complex. This Mus musculus (Mouse) protein is Integrator complex subunit 5 (Ints5).